A 484-amino-acid chain; its full sequence is ETS translocation variant 4 (484 aa).

Lys6 participates in a covalent cross-link: Glycyl lysine isopeptide (Lys-Gly) (interchain with G-Cter in SUMO2). Residues 90 to 115 (SPTTRIKKEPQSPRTDPALSCSRKPP) form a disordered region. Lys96 is covalently cross-linked (Glycyl lysine isopeptide (Lys-Gly) (interchain with G-Cter in SUMO)). Ser101 is subject to Phosphoserine. Residue Lys139 forms a Glycyl lysine isopeptide (Lys-Gly) (interchain with G-Cter in SUMO2) linkage. Phosphoserine is present on residues Ser140, Ser149, and Ser214. Glycyl lysine isopeptide (Lys-Gly) (interchain with G-Cter in SUMO) cross-links involve residues Lys226 and Lys260. A Glycyl lysine isopeptide (Lys-Gly) (interchain with G-Cter in SUMO2) cross-link involves residue Lys322. Positions 341-421 (LQLWQFLVAL…AGERYVYKFV (81 aa)) form a DNA-binding region, ETS.

Belongs to the ETS family. In terms of processing, sumoylated; enhanced upon ERK/MAP kinase pathway activation, it positively regulates the transcriptional activator capacity. Sumoylation at Lys-96 probably requires phosphorylation at Ser-101. Transiently polysumoylated and desumoylated by SENP1. Sumoylation is a prerequisite to polyubiquitination which in turn increases proteasomal-mediated degradation. Probably polyubiquitinated by RNF4 and deubiquitinated by USP2. As to expression, expressed in keratinocytes.

The protein localises to the nucleus. Functionally, transcriptional activator. May play a role in keratinocyte differentiation. In terms of biological role, (Microbial infection) Binds to the enhancer of the adenovirus E1A gene and acts as a transcriptional activator; the core-binding sequence is 5'-[AC]GGA[AT]GT-3'. The polypeptide is ETS translocation variant 4 (ETV4) (Homo sapiens (Human)).